The following is a 547-amino-acid chain: Glucose-6-phosphate isomerase (547 aa).

Glutamate 351 functions as the Proton donor in the catalytic mechanism. Residues histidine 382 and lysine 509 contribute to the active site.

It belongs to the GPI family.

It is found in the cytoplasm. It catalyses the reaction alpha-D-glucose 6-phosphate = beta-D-fructose 6-phosphate. Its pathway is carbohydrate biosynthesis; gluconeogenesis. It functions in the pathway carbohydrate degradation; glycolysis; D-glyceraldehyde 3-phosphate and glycerone phosphate from D-glucose: step 2/4. Catalyzes the reversible isomerization of glucose-6-phosphate to fructose-6-phosphate. The sequence is that of Glucose-6-phosphate isomerase from Coxiella burnetii (strain CbuK_Q154) (Coxiella burnetii (strain Q154)).